A 237-amino-acid polypeptide reads, in one-letter code: Demethylmenaquinone methyltransferase (237 aa).

Residues Thr58, Asp79, and 106–107 (NA) each bind S-adenosyl-L-methionine.

This sequence belongs to the class I-like SAM-binding methyltransferase superfamily. MenG/UbiE family.

It carries out the reaction a 2-demethylmenaquinol + S-adenosyl-L-methionine = a menaquinol + S-adenosyl-L-homocysteine + H(+). Its pathway is quinol/quinone metabolism; menaquinone biosynthesis; menaquinol from 1,4-dihydroxy-2-naphthoate: step 2/2. Its function is as follows. Methyltransferase required for the conversion of demethylmenaquinol (DMKH2) to menaquinol (MKH2). The polypeptide is Demethylmenaquinone methyltransferase (Listeria innocua serovar 6a (strain ATCC BAA-680 / CLIP 11262)).